We begin with the raw amino-acid sequence, 135 residues long: Classical arabinogalactan protein 4 (135 aa).

The N-terminal stretch at 1 to 21 is a signal peptide; sequence MGSKIVQVFLMLALFATSALA. A Pyrrolidone carboxylic acid modification is found at Q22. A disordered region spans residues 22–112; that stretch reads QAPAPTPTAT…PSDASPAPSA (91 aa). 9 positions are modified to 4-hydroxyproline: P24, P26, P28, P32, P33, P34, P37, P38, and P39. 9 O-linked (Ara...) hydroxyproline glycosylation sites follow: P24, P26, P28, P32, P33, P34, P37, P38, and P39. Pro residues predominate over residues 25-76; it reads APTPTATPPPATPPPVATPPPVATPPPAATPAPATPPPAATPAPATTPPSVA. Over residues 96 to 112 the composition is skewed to low complexity; that stretch reads SPSSAPGPSDASPAPSA. S111 carries GPI-anchor amidated serine lipidation. The propeptide at 112–135 is removed in mature form; sequence AAFSNKAFFAGTAFAAIMYAAVLA.

The protein belongs to the classical AGP family. In terms of processing, O-glycosylated on hydroxyprolines; noncontiguous hydroxylproline residues are glycosylated with arabinogalactan. As to expression, highly expressed in roots, flowers and leaves.

The protein localises to the cell membrane. In terms of biological role, proteoglycan that seems to be implicated in diverse developmental roles such as differentiation, cell-cell recognition, embryogenesis and programmed cell death. In Arabidopsis thaliana (Mouse-ear cress), this protein is Classical arabinogalactan protein 4 (AGP4).